A 487-amino-acid polypeptide reads, in one-letter code: GTPase Der (487 aa).

EngA-type G domains are found at residues 3 to 167 (FTLA…EGFA) and 203 to 378 (LQIA…DIWN). GTP contacts are provided by residues 9 to 16 (GRPNVGKS), 56 to 60 (DTAGL), 119 to 122 (NKAE), 209 to 216 (GRPNAGKS), 256 to 260 (DTAGM), and 321 to 324 (NKWD). Residues 379–463 (RRITTARLNS…PIRLTMRGQG (85 aa)) enclose the KH-like domain. The segment at 459–487 (MRGQGDKNPFKERKFRTPSRLRKHLGKKG) is disordered. A compositionally biased stretch (basic residues) spans 471–487 (RKFRTPSRLRKHLGKKG).

Belongs to the TRAFAC class TrmE-Era-EngA-EngB-Septin-like GTPase superfamily. EngA (Der) GTPase family. Associates with the 50S ribosomal subunit.

In terms of biological role, GTPase that plays an essential role in the late steps of ribosome biogenesis. The protein is GTPase Der of Cereibacter sphaeroides (strain ATCC 17025 / ATH 2.4.3) (Rhodobacter sphaeroides).